Reading from the N-terminus, the 395-residue chain is Phosphopentomutase (395 aa).

Mn(2+) is bound by residues Asp-14, Asp-286, His-291, Asp-327, His-328, and His-339.

Belongs to the phosphopentomutase family. Requires Mn(2+) as cofactor.

The protein resides in the cytoplasm. It carries out the reaction 2-deoxy-alpha-D-ribose 1-phosphate = 2-deoxy-D-ribose 5-phosphate. The enzyme catalyses alpha-D-ribose 1-phosphate = D-ribose 5-phosphate. Its pathway is carbohydrate degradation; 2-deoxy-D-ribose 1-phosphate degradation; D-glyceraldehyde 3-phosphate and acetaldehyde from 2-deoxy-alpha-D-ribose 1-phosphate: step 1/2. In terms of biological role, isomerase that catalyzes the conversion of deoxy-ribose 1-phosphate (dRib-1-P) and ribose 1-phosphate (Rib-1-P) to deoxy-ribose 5-phosphate (dRib-5-P) and ribose 5-phosphate (Rib-5-P), respectively. This Staphylococcus haemolyticus (strain JCSC1435) protein is Phosphopentomutase.